The sequence spans 232 residues: Orotidine 5'-phosphate decarboxylase (232 aa).

Substrate-binding positions include Asp11, Lys33, 60 to 69 (DLKFHDIPNT), Thr120, Arg181, Gln190, Gly210, and Arg211. The Proton donor role is filled by Lys62.

It belongs to the OMP decarboxylase family. Type 1 subfamily. Homodimer.

It carries out the reaction orotidine 5'-phosphate + H(+) = UMP + CO2. It participates in pyrimidine metabolism; UMP biosynthesis via de novo pathway; UMP from orotate: step 2/2. In terms of biological role, catalyzes the decarboxylation of orotidine 5'-monophosphate (OMP) to uridine 5'-monophosphate (UMP). In Vibrio vulnificus (strain YJ016), this protein is Orotidine 5'-phosphate decarboxylase.